Here is a 252-residue protein sequence, read N- to C-terminus: Putative hydro-lyase OB3382 (252 aa).

Belongs to the D-glutamate cyclase family.

The sequence is that of Putative hydro-lyase OB3382 from Oceanobacillus iheyensis (strain DSM 14371 / CIP 107618 / JCM 11309 / KCTC 3954 / HTE831).